A 156-amino-acid chain; its full sequence is Small ribosomal subunit protein bS16 (156 aa).

Over residues 124-135 (AAKAAEAETPAE) the composition is skewed to low complexity. A disordered region spans residues 124–156 (AAKAAEAETPAEVQHDDEKVELADVEESAPESV). The span at 136 to 145 (VQHDDEKVEL) shows a compositional bias: basic and acidic residues. Residues 146-156 (ADVEESAPESV) show a composition bias toward acidic residues.

This sequence belongs to the bacterial ribosomal protein bS16 family.

This is Small ribosomal subunit protein bS16 from Bifidobacterium animalis subsp. lactis (strain AD011).